The chain runs to 667 residues: Protein OS-9 (667 aa).

An N-terminal signal peptide occupies residues 1–25; sequence MAAETLLSSLLGLLLLGLLLPATLT. In terms of domain architecture, MRH spans 108–230; sequence APCLLKTKDW…TIRTPRLCPH (123 aa). Cys-110 and Cys-123 are joined by a disulfide. Trp-117, Trp-118, and Gln-130 together coordinate a mannooligosaccharide derivative. The N-linked (GlcNAc...) asparagine glycan is linked to Asn-177. Cystine bridges form between Cys-181–Cys-216 and Cys-196–Cys-228. A mannooligosaccharide derivative is bound by residues Asp-182, Arg-188, Glu-212, and Tyr-218. Disordered regions lie at residues 262–450, 506–541, and 636–667; these read QADS…SDRE, EKQS…EHRV, and ERQR…EFDF. Basic and acidic residues-rich tracts occupy residues 263–279, 304–328, and 396–408; these read ADSK…RQDP, ENSK…KEET, and PSRE…KGDP. Positions 410–429 are enriched in acidic residues; the sequence is QQNEVEEEEDDEDEDEDEDE. Over residues 430–450 the composition is skewed to basic and acidic residues; it reads RQLLGEFEKELEGILLPSDRE. Residues 514 to 523 show a composition bias toward basic residues; that stretch reads KKHRKRRVVP. Positions 636-647 are enriched in basic and acidic residues; that stretch reads ERQRQKELESNY.

It belongs to the OS-9 family. Component of the HRD1 complex, which comprises at least SYNV1/HRD1, DERL1/2, FAM8A1, HERPUD1/HERP, OS9, SEL1L and UBE2J1. FAM8A1 is stabilized by interaction with SYNV1, which prevents its proteasomal degradation. OS9 and UBE2J1 recruitment to the complex may be mediated by SEL1L. Through this complex, may interact with ERLEC1 and HSPA5. Interacts (via C-terminus) with CPNE6 (via second C2 domain); this interaction occurs in a calcium-dependent manner in vitro. Interacts with CREB3. Intramolecular disulfide bonds.

It is found in the endoplasmic reticulum lumen. In terms of biological role, lectin component of the HRD1 complex, which functions in endoplasmic reticulum (ER) quality control and ER-associated degradation (ERAD). Specifically recognizes and binds improperly folded glycoproteins as well as hyperglycosylated proteins, retain them in the ER, and transfers them to the ubiquitination machinery and promote their degradation. Possible targets include TRPV4 as well as hyperglycosylated HSP90B1. The polypeptide is Protein OS-9 (OS9) (Bos taurus (Bovine)).